The sequence spans 103 residues: Co-chaperonin GroES (103 aa).

This sequence belongs to the GroES chaperonin family. As to quaternary structure, heptamer of 7 subunits arranged in a ring. Interacts with the chaperonin GroEL.

It localises to the cytoplasm. Functionally, together with the chaperonin GroEL, plays an essential role in assisting protein folding. The GroEL-GroES system forms a nano-cage that allows encapsulation of the non-native substrate proteins and provides a physical environment optimized to promote and accelerate protein folding. GroES binds to the apical surface of the GroEL ring, thereby capping the opening of the GroEL channel. The chain is Co-chaperonin GroES from Prochlorococcus marinus (strain MIT 9215).